Reading from the N-terminus, the 357-residue chain is UDP-N-acetylglucosamine--N-acetylmuramyl-(pentapeptide) pyrophosphoryl-undecaprenol N-acetylglucosamine transferase (357 aa).

Residues 13–15, Arg-166, Ser-196, and Gln-291 contribute to the UDP-N-acetyl-alpha-D-glucosamine site; that span reads SAG.

It belongs to the glycosyltransferase 28 family. MurG subfamily.

It is found in the cell membrane. The enzyme catalyses di-trans,octa-cis-undecaprenyl diphospho-N-acetyl-alpha-D-muramoyl-L-alanyl-D-glutamyl-meso-2,6-diaminopimeloyl-D-alanyl-D-alanine + UDP-N-acetyl-alpha-D-glucosamine = di-trans,octa-cis-undecaprenyl diphospho-[N-acetyl-alpha-D-glucosaminyl-(1-&gt;4)]-N-acetyl-alpha-D-muramoyl-L-alanyl-D-glutamyl-meso-2,6-diaminopimeloyl-D-alanyl-D-alanine + UDP + H(+). The protein operates within cell wall biogenesis; peptidoglycan biosynthesis. Its function is as follows. Cell wall formation. Catalyzes the transfer of a GlcNAc subunit on undecaprenyl-pyrophosphoryl-MurNAc-pentapeptide (lipid intermediate I) to form undecaprenyl-pyrophosphoryl-MurNAc-(pentapeptide)GlcNAc (lipid intermediate II). The sequence is that of UDP-N-acetylglucosamine--N-acetylmuramyl-(pentapeptide) pyrophosphoryl-undecaprenol N-acetylglucosamine transferase from Clostridium perfringens (strain SM101 / Type A).